A 376-amino-acid chain; its full sequence is Putative cytosolic 5'-nucleotidase 3 (376 aa).

Residue D119 is the Nucleophile of the active site. Residues D119 and D121 each coordinate Mg(2+). The active-site Proton donor is D121. Substrate-binding positions include E168, S189, S236–A237, and K286. Residue D312 participates in Mg(2+) binding.

Belongs to the pyrimidine 5'-nucleotidase family.

The protein localises to the cytoplasm. The enzyme catalyses a ribonucleoside 5'-phosphate + H2O = a ribonucleoside + phosphate. This chain is Putative cytosolic 5'-nucleotidase 3, found in Caenorhabditis elegans.